We begin with the raw amino-acid sequence, 138 residues long: Transcriptional activator protein (138 aa).

A compositionally biased stretch (low complexity) spans 1 to 20 (MTGSKKTPSTSPSKKLSSPP). The tract at residues 1 to 23 (MTGSKKTPSTSPSKKLSSPPEVK) is disordered. The Nuclear localization signal signature appears at 23 to 37 (KLRHRFAKRQIRRRR). The segment at 42-59 (CGCSIYIHINCVNNGFTH) is a zinc-finger region. Residues 85-106 (NTASGDANVHTQPGISHSSQSK) are compositionally biased toward polar residues. The disordered stretch occupies residues 85-123 (NTASGDANVHTQPGISHSSQSKPQHEDSVGSPQSLLQLP). Over residues 113 to 123 (VGSPQSLLQLP) the composition is skewed to low complexity. Residues 124–138 (SLDDVDDDFWADLLK) are transactivation.

This sequence belongs to the geminiviridae transcriptional activator protein family. In terms of assembly, monomer. Homodimer. Homooligomer. Self-interaction correlates with nuclear localization and efficient activation of transcription. Monomers suppress local silencing by interacting with and inactivating host adenosine kinase 2 (ADK2) in the cytoplasm. Interacts with and inhibits host SNF1 kinase. Binds to ssDNA. Phosphorylated.

The protein resides in the host nucleus. It is found in the host cytoplasm. Strong activator of the late viral genes promoters. Enhances the expression of the capsid protein and nuclear shuttle protein. Acts as a suppressor of RNA-mediated gene silencing, also known as post-transcriptional gene silencing (PTGS), a mechanism of plant viral defense that limits the accumulation of viral RNAs. Suppresses the host RNA silencing by inhibiting adenosine kinase 2 (ADK2), a kinase involved in a general methylation pathway. Also suppresses the host basal defense by interacting with and inhibiting SNF1 kinase, a key regulator of cell metabolism implicated in innate antiviral defense. Determines pathogenicity. This is Transcriptional activator protein from Pepper huasteco yellow vein virus (PHYVV).